A 271-amino-acid chain; its full sequence is Phosphatidylglycerol--prolipoprotein diacylglyceryl transferase (271 aa).

Helical transmembrane passes span 17–37 (LAIH…FFLA), 63–83 (ILFL…CLFY), and 95–115 (IFAV…VLVS). Arg-146 is an a 1,2-diacyl-sn-glycero-3-phospho-(1'-sn-glycerol) binding site. The next 3 membrane-spanning stretches (helical) occupy residues 182 to 202 (SQVY…WLYA), 209 to 229 (GQVS…AEFF), and 243 to 263 (MSMG…LWIW).

The protein belongs to the Lgt family.

The protein localises to the cell inner membrane. The enzyme catalyses L-cysteinyl-[prolipoprotein] + a 1,2-diacyl-sn-glycero-3-phospho-(1'-sn-glycerol) = an S-1,2-diacyl-sn-glyceryl-L-cysteinyl-[prolipoprotein] + sn-glycerol 1-phosphate + H(+). It functions in the pathway protein modification; lipoprotein biosynthesis (diacylglyceryl transfer). In terms of biological role, catalyzes the transfer of the diacylglyceryl group from phosphatidylglycerol to the sulfhydryl group of the N-terminal cysteine of a prolipoprotein, the first step in the formation of mature lipoproteins. This is Phosphatidylglycerol--prolipoprotein diacylglyceryl transferase from Polaromonas naphthalenivorans (strain CJ2).